Reading from the N-terminus, the 387-residue chain is 1,3-propanediol dehydrogenase (387 aa).

The protein belongs to the iron-containing alcohol dehydrogenase family. As to quaternary structure, homooctamer. Fe cation serves as cofactor.

It carries out the reaction propane-1,3-diol + NAD(+) = 3-hydroxypropanal + NADH + H(+). In Klebsiella pneumoniae, this protein is 1,3-propanediol dehydrogenase (dhaT).